Reading from the N-terminus, the 258-residue chain is uncharacterized protein (258 aa).

The next 4 membrane-spanning stretches (helical) occupy residues Leu33 to Asn53, Phe59 to Phe79, Leu88 to Phe108, and Ile140 to Gln160. The interval Asn237–Glu258 is disordered. The segment covering Ser242–Glu258 has biased composition (polar residues).

Its subcellular location is the membrane. This is an uncharacterized protein from Dictyostelium discoideum (Social amoeba).